A 184-amino-acid chain; its full sequence is Protein PLANT CADMIUM RESISTANCE 4 (184 aa).

Over residues 1–10 the composition is skewed to polar residues; sequence MGRPGSQPNE. A disordered region spans residues 1 to 21; sequence MGRPGSQPNEAQPPPVQVQPT. The chain crosses the membrane as a helical span at residues 96 to 116; the sequence is GGLLYGMIFFIGVPFVYSCMF.

Belongs to the cornifelin family.

It localises to the membrane. Functionally, may be involved in heavy metals transport. The sequence is that of Protein PLANT CADMIUM RESISTANCE 4 (PCR4) from Arabidopsis thaliana (Mouse-ear cress).